A 624-amino-acid polypeptide reads, in one-letter code: Pentatricopeptide repeat-containing protein At4g31070, mitochondrial (624 aa).

The N-terminal 15 residues, 1–15 (MRWVKLGRRVIMSRA), are a transit peptide targeting the mitochondrion. PPR repeat units lie at residues 56 to 91 (FTAI…GADC), 92 to 122 (DTVV…MLHR), 123 to 157 (DTVS…GFIP), 158 to 192 (KSEL…DERM), 195 to 225 (SVLL…MEVK), 226 to 260 (NEVS…NLRP), 261 to 296 (NRVT…GCHA), 297 to 327 (DERL…SKVR), 328 to 362 (DVVM…GIEA), 363 to 397 (NSVT…GFMS), 398 to 428 (HILL…LTEK), 429 to 463 (DLVS…GHEV), 464 to 498 (DDMA…HMPV), and 499 to 529 (TLEH…MPMK). The type E motif stretch occupies residues 534-610 (IWSSLLSACE…CYGFSKIEPE (77 aa)).

This sequence belongs to the PPR family. PCMP-E subfamily.

The protein resides in the mitochondrion. The chain is Pentatricopeptide repeat-containing protein At4g31070, mitochondrial (PCMP-E7) from Arabidopsis thaliana (Mouse-ear cress).